Reading from the N-terminus, the 186-residue chain is Peptidyl-tRNA hydrolase (186 aa).

A tRNA-binding site is contributed by tyrosine 14. The Proton acceptor role is filled by histidine 19. TRNA contacts are provided by phenylalanine 65, asparagine 67, and asparagine 113.

It belongs to the PTH family. Monomer.

It localises to the cytoplasm. The catalysed reaction is an N-acyl-L-alpha-aminoacyl-tRNA + H2O = an N-acyl-L-amino acid + a tRNA + H(+). In terms of biological role, hydrolyzes ribosome-free peptidyl-tRNAs (with 1 or more amino acids incorporated), which drop off the ribosome during protein synthesis, or as a result of ribosome stalling. Catalyzes the release of premature peptidyl moieties from peptidyl-tRNA molecules trapped in stalled 50S ribosomal subunits, and thus maintains levels of free tRNAs and 50S ribosomes. This Limosilactobacillus fermentum (strain NBRC 3956 / LMG 18251) (Lactobacillus fermentum) protein is Peptidyl-tRNA hydrolase.